The sequence spans 576 residues: 9-cis-epoxycarotenoid dioxygenase NCED2, chloroplastic (576 aa).

Residues 1–34 (MEVPIAAMTFAHPANVMTLASRQPKSKRSHISPA) constitute a chloroplast transit peptide. Fe cation is bound by residues histidine 270, histidine 319, histidine 385, and histidine 563.

It belongs to the carotenoid oxygenase family. It depends on Fe(2+) as a cofactor.

The protein localises to the plastid. It localises to the chloroplast. The enzyme catalyses a 9-cis-epoxycarotenoid + O2 = a 12'-apo-carotenal + 2-cis,4-trans-xanthoxin. It carries out the reaction 9-cis-violaxanthin + O2 = (3S,5R,6S)-5,6-epoxy-3-hydroxy-5,6-dihydro-12'-apo-beta-caroten-12'-al + 2-cis,4-trans-xanthoxin. The catalysed reaction is 9'-cis-neoxanthin + O2 = (3S,5R,6R)-3,5-dihydroxy-6,7-didehydro-5,6-dihydro-12'-apo-beta-caroten-12'-al + 2-cis,4-trans-xanthoxin. Its function is as follows. Has a 11,12(11',12') 9-cis epoxycarotenoid cleavage activity. Catalyzes the first step of abscisic-acid biosynthesis from carotenoids. In Oryza sativa subsp. japonica (Rice), this protein is 9-cis-epoxycarotenoid dioxygenase NCED2, chloroplastic.